A 203-amino-acid chain; its full sequence is Urease accessory protein UreG (203 aa).

G12 to T19 is a binding site for GTP.

The protein belongs to the SIMIBI class G3E GTPase family. UreG subfamily. As to quaternary structure, homodimer. UreD, UreF and UreG form a complex that acts as a GTP-hydrolysis-dependent molecular chaperone, activating the urease apoprotein by helping to assemble the nickel containing metallocenter of UreC. The UreE protein probably delivers the nickel.

The protein localises to the cytoplasm. Its function is as follows. Facilitates the functional incorporation of the urease nickel metallocenter. This process requires GTP hydrolysis, probably effectuated by UreG. This chain is Urease accessory protein UreG, found in Alteromonas mediterranea (strain DSM 17117 / CIP 110805 / LMG 28347 / Deep ecotype).